The primary structure comprises 411 residues: Translation initiation factor 2 subunit gamma (411 aa).

Residues 9 to 203 enclose the tr-type G domain; that stretch reads QAEVNIGMVG…AIEEFIPTPK (195 aa). The segment at 18-25 is G1; the sequence is GHVDHGKT. Residues Asp21, Thr25, Gly46, and Thr48 each contribute to the Mg(2+) site. Residue 21–26 coordinates GTP; it reads DHGKTT. Residues 46 to 50 are G2; sequence GITIK. Zn(2+) is bound by residues Cys61, Cys64, Cys73, and Cys76. The segment at 90–93 is G3; it reads DSPG. Residues 146-149 and 181-183 each bind GTP; these read NKIE and SAL. Residues 146-149 form a G4 region; the sequence is NKIE. Positions 181 to 183 are G5; that stretch reads SAL.

It belongs to the TRAFAC class translation factor GTPase superfamily. Classic translation factor GTPase family. EIF2G subfamily. As to quaternary structure, heterotrimer composed of an alpha, a beta and a gamma chain. The cofactor is Mg(2+).

It carries out the reaction GTP + H2O = GDP + phosphate + H(+). Functionally, eIF-2 functions in the early steps of protein synthesis by forming a ternary complex with GTP and initiator tRNA. This chain is Translation initiation factor 2 subunit gamma, found in Pyrococcus furiosus (strain ATCC 43587 / DSM 3638 / JCM 8422 / Vc1).